The sequence spans 58 residues: Curromycin resistance protein (58 aa).

The segment at 1-37 (MSVVALGATSITPPHGPESQGRPFPARGPVRPSARAR) is disordered. Residues 25–37 (PARGPVRPSARAR) are compositionally biased toward low complexity.

This Streptomyces hygroscopicus protein is Curromycin resistance protein (cre).